Reading from the N-terminus, the 466-residue chain is Glycine--tRNA ligase (466 aa).

The substrate site is built by Arg104 and Glu178. Residues 210 to 212 (RNE), 220 to 225 (FRTREF), 294 to 295 (EL), and 338 to 341 (GADR) each bind ATP. 225 to 229 (FEQME) contacts substrate. 334-338 (EPSLG) is a binding site for substrate.

Belongs to the class-II aminoacyl-tRNA synthetase family. Homodimer.

It is found in the cytoplasm. The catalysed reaction is tRNA(Gly) + glycine + ATP = glycyl-tRNA(Gly) + AMP + diphosphate. Functionally, catalyzes the attachment of glycine to tRNA(Gly). The protein is Glycine--tRNA ligase of Geobacillus thermodenitrificans (strain NG80-2).